The primary structure comprises 1349 residues: Membrane-associated phosphatidylinositol transfer protein 2 (1349 aa).

The tract at residues 262–344 (EDGEEATELV…RDSDESSDDE (83 aa)) is disordered. Residues 302-322 (KQWSTSSKSSRSSKRGASPSR) are compositionally biased toward low complexity. Phosphoserine is present on residues Ser337, Ser341, Ser368, and Ser589. A compositionally biased stretch (gly residues) spans 618–631 (GGGGGSSGGGGSSG). The segment at 618–671 (GGGGGSSGGGGSSGGSSLESSRHLSRSNVDIPRSNGTEDPKRQLPRKRSDSSTY) is disordered. The residue at position 644 (Ser644) is a Phosphoserine. Basic and acidic residues predominate over residues 653–667 (GTEDPKRQLPRKRSD). Ser700, Ser701, and Ser702 each carry phosphoserine. A DDHD domain is found at 715–963 (FDFEITDLFL…VSFLLRQVMR (249 aa)). Arg828 is modified (omega-N-methylarginine). Residues 876-900 (LPAPSPTTPGPHPPARKASPGLERA) are disordered. Pro residues predominate over residues 878–888 (APSPTTPGPHP). Ser1277 is subject to Phosphoserine. Residues 1296–1326 (TISAQPSGPSHRHERTQSQADGEQRGQRSMS) are disordered.

It belongs to the PtdIns transfer protein family. PI transfer class IIA subfamily. Interacts with PTK2B via its C-terminus. Interacts with CPNE4 (via VWFA domain). As to expression, highly expressed in brain, heart, ovary, testis and thymus. Detected in small intestine, prostate, pancreas, skeletal muscle, liver, colon and placenta.

Its subcellular location is the endomembrane system. Its function is as follows. Catalyzes the transfer of phosphatidylinositol and phosphatidylcholine between membranes (in vitro). Binds calcium ions. This Homo sapiens (Human) protein is Membrane-associated phosphatidylinositol transfer protein 2 (PITPNM2).